The sequence spans 61 residues: Potassium channel toxin alpha-KTx 6.7 (61 aa).

The signal sequence occupies residues 1-23; sequence MNAKFILLLLVVTTTMLLPDTQG. Cystine bridges form between Cys-29–Cys-50, Cys-35–Cys-55, Cys-39–Cys-57, and Cys-45–Cys-60. Position 60 is a cysteine amide (Cys-60).

Belongs to the short scorpion toxin superfamily. Potassium channel inhibitor family. Alpha-KTx 06 subfamily. As to expression, expressed by the venom gland.

It localises to the secreted. Its function is as follows. Blocker of voltage-gated potassium channels. This chain is Potassium channel toxin alpha-KTx 6.7, found in Opistophthalmus carinatus (African yellow leg scorpion).